The primary structure comprises 165 residues: Interferon gamma (165 aa).

Residues 1–23 form the signal peptide; it reads MKYTSYILAFQLCIVLGSLGCYC. The residue at position 24 (glutamine 24) is a Pyrrolidone carboxylic acid. N-linked (GlcNAc...) asparagine glycosylation is found at asparagine 48 and asparagine 120.

It belongs to the type II (or gamma) interferon family. In terms of assembly, homodimer. Interacts with IFNGR1 (via extracellular domain); this interaction promotes IFNGR1 dimerization. Released primarily from activated T lymphocytes.

It is found in the secreted. Functionally, type II interferon produced by immune cells such as T-cells and NK cells that plays crucial roles in antimicrobial, antiviral, and antitumor responses by activating effector immune cells and enhancing antigen presentation. Primarily signals through the JAK-STAT pathway after interaction with its receptor IFNGR1 to affect gene regulation. Upon IFNG binding, IFNGR1 intracellular domain opens out to allow association of downstream signaling components JAK2, JAK1 and STAT1, leading to STAT1 activation, nuclear translocation and transcription of IFNG-regulated genes. Many of the induced genes are transcription factors such as IRF1 that are able to further drive regulation of a next wave of transcription. Plays a role in class I antigen presentation pathway by inducing a replacement of catalytic proteasome subunits with immunoproteasome subunits. In turn, increases the quantity, quality, and repertoire of peptides for class I MHC loading. Increases the efficiency of peptide generation also by inducing the expression of activator PA28 that associates with the proteasome and alters its proteolytic cleavage preference. Up-regulates as well MHC II complexes on the cell surface by promoting expression of several key molecules such as cathepsins B/CTSB, H/CTSH, and L/CTSL. Participates in the regulation of hematopoietic stem cells during development and under homeostatic conditions by affecting their development, quiescence, and differentiation. The polypeptide is Interferon gamma (IFNG) (Macaca fascicularis (Crab-eating macaque)).